A 911-amino-acid polypeptide reads, in one-letter code: Leucine--tRNA ligase (911 aa).

Residues 42–52 carry the 'HIGH' region motif; the sequence is PYPSGKLHMGH. A 'KMSKS' region motif is present at residues 659 to 663; the sequence is TMSKS. Lys662 is an ATP binding site.

Belongs to the class-I aminoacyl-tRNA synthetase family.

Its subcellular location is the cytoplasm. It catalyses the reaction tRNA(Leu) + L-leucine + ATP = L-leucyl-tRNA(Leu) + AMP + diphosphate. The protein is Leucine--tRNA ligase of Delftia acidovorans (strain DSM 14801 / SPH-1).